The chain runs to 201 residues: MSRYRGPRFKKIRRLGSLPGLTSKRPTVKSELRNQSRSSKKSQYRIRLEEKQKLRFHYGLTERQLLKYVRIAGKAKGSTGQVLLQLLEMRLDNILFRLGMAATIPQARQLINHRHVLVNGHIVDIPSYRCKPQDIITAKDEQKSKTLIQNYLDSAPREKLPNHLTLHPFQYKGLINQIIDNKWVGLKINELLVVEYYSRQT.

The interval 15–44 is disordered; the sequence is LGSLPGLTSKRPTVKSELRNQSRSSKKSQY. An S4 RNA-binding domain is found at 89 to 151; that stretch reads MRLDNILFRL…QKSKTLIQNY (63 aa).

This sequence belongs to the universal ribosomal protein uS4 family. In terms of assembly, part of the 30S ribosomal subunit. Contacts protein S5. The interaction surface between S4 and S5 is involved in control of translational fidelity.

It is found in the plastid. Its subcellular location is the chloroplast. One of the primary rRNA binding proteins, it binds directly to 16S rRNA where it nucleates assembly of the body of the 30S subunit. Functionally, with S5 and S12 plays an important role in translational accuracy. In Glycine max (Soybean), this protein is Small ribosomal subunit protein uS4c (rps4).